Reading from the N-terminus, the 142-residue chain is Ninjurin-2 (142 aa).

The segment at 1-21 (MESARENIDLQPGSSDPRSQP) is disordered. Residues 1-60 (MESARENIDLQPGSSDPRSQPINLNHYATKKSVAESMLDVALFMSNAMRLKAVLEQGPSS) lie on the Extracellular side of the membrane. Residues 12–21 (PGSSDPRSQP) are compositionally biased toward polar residues. The interval 25-37 (NHYATKKSVAESM) is helix alpha1. A helix alpha2 region spans residues 38 to 57 (LDVALFMSNAMRLKAVLEQG). The helical transmembrane segment at 61-92 (HYYTTLVTLISLSLLLQVVIGVLLVVIARLNL) threads the bilayer. Topologically, residues 93–96 (NEVE) are cytoplasmic. Residues 97–126 (KQWRLNQLNNAATILVFFTVVINVFITAFG) form a helical membrane-spanning segment. Residue glutamine 103 coordinates cholesterol. The Extracellular portion of the chain corresponds to 127 to 142 (AHKTGFLAARASRNPL).

The protein belongs to the ninjurin family. As to quaternary structure, homooligomer; in response to stimuli, homooligomerizes into filaments. In contrast to NINJ1, the filament is curved toward the intracellular space, preventing its circularization on a relatively flat membrane to mediate plasma membrane rupture: curvature is caused by cholesterol-binding at the cytoplasmic leaflet. Widely expressed. In adult, higher expression in the bone marrow and peripheral blood lymphocytes, medium in the lung, lymph node, thyroid, uterus, thymus, spleen, prostate and skeletal muscle, lower in the liver, placenta, brain, heart and kidney. In embryo, higher expression in the thymus, heart and liver, lower in the spleen, lung, brain and kidney.

The protein resides in the cell membrane. In terms of biological role, its role in unclear. In contrast to NINJ1 paralog, does not mediate plasma membrane rupture (cytolysis) downstream of necroptotic and pyroptotic programmed cell death. While it is able to oligomerize and form filaments, filaments are curved toward the intracellular space, preventing circularization to mediate plasma membrane rupture. May act as a homophilic transmembrane adhesion molecule involved in nerve regeneration. Promotes axonal growth. The sequence is that of Ninjurin-2 from Homo sapiens (Human).